Consider the following 666-residue polypeptide: Enzymatic polyprotein (666 aa).

The active site involves Asp-54. The Reverse transcriptase domain maps to 215–445 (ENPIDPIKSK…EKINFLGLEI (231 aa)).

It belongs to the caulimoviridae enzymatic polyprotein family.

The catalysed reaction is DNA(n) + a 2'-deoxyribonucleoside 5'-triphosphate = DNA(n+1) + diphosphate. Encodes for at least two polypeptides: protease (PR) and reverse transcriptase (RT). The protease processes the polyprotein in cis. Reverse transcriptase is multifunctional enzyme that converts the viral RNA genome into dsDNA in viral cytoplasmic capsids. This enzyme displays a DNA polymerase activity that can copy either DNA or RNA templates, and a ribonuclease H (RNase H) activity that cleaves the RNA strand of RNA-DNA heteroduplexes in a partially processive 3'- to 5'-endonucleasic mode. Neo-synthesized pregenomic RNA (pgRNA) are encapsidated, and reverse-transcribed inside the nucleocapsid. Partial (+)DNA is synthesized from the (-)DNA template and generates the relaxed circular DNA (RC-DNA) genome. After budding and infection, the RC-DNA migrates in the nucleus, and is converted into a plasmid-like covalently closed circular DNA (cccDNA). This is Enzymatic polyprotein from Figwort mosaic virus (strain DxS) (FMV).